Reading from the N-terminus, the 249-residue chain is uncharacterized protein (249 aa).

Positions 30 to 65 (KVDKLKKLEIKKLEDQKKLKEQEEKHRLTLIRLANA) form a coiled coil. Positions 66–97 (PPQTNSINNNNNNNNNIKTNRPPLIYGEDKDK) are disordered.

This is an uncharacterized protein from Dictyostelium discoideum (Social amoeba).